Consider the following 384-residue polypeptide: MELQEVLHMNEGEGDTSYAKNASYNLALAKVKPFLEQCIRELLRANLPNINKCIKVADLGCASGPNTLLTVRDIVQSIDKVGQEEKNELERPTIQIFLNDLFQNDFNSVFKLLPSFYRKLEKENGRKIGSCLISAMPGSFYGRLFPEESMHFLHSCYSVHWLSQVPSGLVIELGIGANKGSIYSSKASRPPVQKAYLDQFTKDFTTFLRIHSKELFSRGRMLLTCICKVDEYDEPNPLDLLDMAINDLIVEGHLEEEKLASFNLPFFTPSAEEVKCIVEEEGSFEILYLETFKAHYDAGFSIDDDYPVRSHFQVYGDEHIKAEYVASLIRSVYEPILASHFGEAIMPDLFHRLAKHAAKVLHLGKGCYNNLIISLAKKPEKSDV.

S-adenosyl-L-homocysteine-binding residues include Tyr18, Cys61, Asn66, Asp100, Leu101, Ser139, Phe140, and Cys156. The theobromine site is built by Tyr157, His160, and Trp161. The Mg(2+) site is built by Asn178, Phe262, and Asn263. Tyr368 provides a ligand contact to theobromine.

Belongs to the methyltransferase superfamily. Type-7 methyltransferase family. Requires Mg(2+) as cofactor. In terms of tissue distribution, expressed, at low levels, in young leaves, floral buds and immature fruits (grains), but not in old leaves and mature fruits. Highly expressed in developing endosperm and flower buds. Detected in young leaves.

The catalysed reaction is 7-methylxanthine + S-adenosyl-L-methionine = theobromine + S-adenosyl-L-homocysteine + H(+). It participates in alkaloid biosynthesis. Its function is as follows. Involved in the biosynthesis of caffeine. Catalyzes the conversion of 7-methylxanthine (7mX) to theobromine and with a lower activity of paraxanthine to caffeine. Does not have 1-N-methylation activity. This chain is Monomethylxanthine methyltransferase 2, found in Coffea arabica (Arabian coffee).